We begin with the raw amino-acid sequence, 245 residues long: 5-oxoprolinase subunit A (245 aa).

It belongs to the LamB/PxpA family. In terms of assembly, forms a complex composed of PxpA, PxpB and PxpC.

It carries out the reaction 5-oxo-L-proline + ATP + 2 H2O = L-glutamate + ADP + phosphate + H(+). Functionally, catalyzes the cleavage of 5-oxoproline to form L-glutamate coupled to the hydrolysis of ATP to ADP and inorganic phosphate. The sequence is that of 5-oxoprolinase subunit A from Haemophilus influenzae (strain PittGG).